The following is a 664-amino-acid chain: MSELLLELFSEEIPAFMQKNAEEAYLNIFTKIFKENEIFAQVQVFVGPRRITLHATNLPKVILPKEEEIKGPSIEAPEIAINGFCKVHNVNKFDLSTKLINKKLYYFFVKKTQAREMKEILPKIIIDAINKYSWIKSMFWGCYKIKWIRPLRNILCIFDGEILPLQFGHLSANNITYGHRLTNNKKLEIIDFENYRNKLLENNVILERLKREEIIKVGLLELANAQNLNIKQDARLIEEVTGLNEFPVVLLGKIPQKFLELPEEVIISVMRKHQKYFCLFDKTGNFAPYFLFVINGRFVNIELILQGNEKVLSARLADALYFYKHDIAKTLESRFSKLESVIFHAKLGSLKEKVDRITDICRYIAPDNIDLIMAARLCKSDLVSDMVGEFPDLQGIMGYYYAKHEGLNEEVAKAIRDHYKPQGLNDNVPSGNATLLALADKLDSLVGLIIVGETPNGSGDPYALRRQALGIIRIIIENKLEINFINLINFAVSLYKVPTNTHLDSVISFFEERAKFYFKNDYDIALINAVLDLNLVDTKFKLDTLKEFLVQDVGKQLLNAYKRVSNIIGNQKITGLVDVSLFSTQYEKELFEVIQIISQQIIAIIANKDYKKALNLLSSLLKPITSFFDNVLVNDSDPKIAQNRLSLLHNTCEVFDKVVKFCRL.

The protein belongs to the class-II aminoacyl-tRNA synthetase family. In terms of assembly, tetramer of two alpha and two beta subunits.

It is found in the cytoplasm. The enzyme catalyses tRNA(Gly) + glycine + ATP = glycyl-tRNA(Gly) + AMP + diphosphate. The polypeptide is Glycine--tRNA ligase beta subunit (Rickettsia typhi (strain ATCC VR-144 / Wilmington)).